The following is a 504-amino-acid chain: ATP synthase subunit alpha, chloroplastic (504 aa).

170 to 177 (GDRQTGKT) contributes to the ATP binding site. Threonine 257 carries the phosphothreonine modification.

The protein belongs to the ATPase alpha/beta chains family. F-type ATPases have 2 components, CF(1) - the catalytic core - and CF(0) - the membrane proton channel. CF(1) has five subunits: alpha(3), beta(3), gamma(1), delta(1), epsilon(1). CF(0) has four main subunits: a, b, b' and c.

It localises to the plastid. The protein localises to the chloroplast thylakoid membrane. The enzyme catalyses ATP + H2O + 4 H(+)(in) = ADP + phosphate + 5 H(+)(out). In terms of biological role, produces ATP from ADP in the presence of a proton gradient across the membrane. The alpha chain is a regulatory subunit. The sequence is that of ATP synthase subunit alpha, chloroplastic from Nasturtium officinale (Watercress).